The primary structure comprises 458 residues: Plant UBX domain-containing protein 2 (458 aa).

A disordered region spans residues 1-103 (MDDVKDKLKG…APQDGFDPYG (103 aa)). Residues 44 to 54 (PIQNRFNSSQA) show a composition bias toward polar residues. Positions 56–70 (NPTPRPKPNPNPLPE) are enriched in pro residues. Positions 74-85 (SSSDQKISGSTR) are enriched in polar residues. The C2H2-type; atypical zinc-finger motif lies at 121-143 (FECPICKNPFTSEEEVSVHVESC). In terms of domain architecture, PUB spans 181–248 (SSIDVLLRLF…EIWAVMDVPS (68 aa)). The UBX domain maps to 349–433 (KRYKRSMIRV…ELVPSALIRF (85 aa)).

As to quaternary structure, interacts with CDC48A in vitro and co-fractionates with membrane-associated but not soluble CDC48A in vivo.

It localises to the membrane. Its function is as follows. Facilitates the interaction of SYP31 and CDC48A, thereby regulating an CDC48A membrane-associated function. Appears to act as a negative regulator mediating the powdery mildew-plant interaction. The polypeptide is Plant UBX domain-containing protein 2 (Arabidopsis thaliana (Mouse-ear cress)).